We begin with the raw amino-acid sequence, 163 residues long: NADH-quinone oxidoreductase subunit I (163 aa).

2 consecutive 4Fe-4S ferredoxin-type domains span residues 54-84 (LRRYPNGEERCIACKLCEAVCPANAITIESE) and 94-123 (IVYDIDLFKCIFCGFCEEACPVDAIVETQI). Positions 64, 67, 70, 74, 103, 106, 109, and 113 each coordinate [4Fe-4S] cluster.

The protein belongs to the complex I 23 kDa subunit family. In terms of assembly, NDH-1 is composed of 14 different subunits. Subunits NuoA, H, J, K, L, M, N constitute the membrane sector of the complex. [4Fe-4S] cluster serves as cofactor.

It localises to the cell inner membrane. It carries out the reaction a quinone + NADH + 5 H(+)(in) = a quinol + NAD(+) + 4 H(+)(out). In terms of biological role, NDH-1 shuttles electrons from NADH, via FMN and iron-sulfur (Fe-S) centers, to quinones in the respiratory chain. The immediate electron acceptor for the enzyme in this species is believed to be ubiquinone. Couples the redox reaction to proton translocation (for every two electrons transferred, four hydrogen ions are translocated across the cytoplasmic membrane), and thus conserves the redox energy in a proton gradient. The sequence is that of NADH-quinone oxidoreductase subunit I from Ruthia magnifica subsp. Calyptogena magnifica.